We begin with the raw amino-acid sequence, 398 residues long: Diaminopropionate ammonia-lyase (398 aa).

Position 77 is an N6-(pyridoxal phosphate)lysine (lysine 77).

It belongs to the diaminopropionate ammonia-lyase family. In terms of assembly, homodimer. Pyridoxal 5'-phosphate serves as cofactor.

It carries out the reaction (S)-2,3-diaminopropanoate + H2O + H(+) = pyruvate + 2 NH4(+). The enzyme catalyses (R)-2,3-diaminopropanoate + H2O + H(+) = pyruvate + 2 NH4(+). Its function is as follows. Catalyzes the alpha,beta-elimination reaction of both L- and D-alpha,beta-diaminopropionate (DAP) to form pyruvate and ammonia. The D-isomer of serine is degraded to pyruvate, though very poorly; other amino acids (L-serine, D- and L-threonine, D- and L-beta-Cl-alanine) are not substrates. In Escherichia coli O157:H7, this protein is Diaminopropionate ammonia-lyase (ygeX).